A 209-amino-acid chain; its full sequence is Max dimerization protein 4 (209 aa).

The segment at 6 to 23 (LLILLEAAEYLERRDREA) is interaction with SIN3A and SIN3B. Residues 53 to 105 (NNRSSHNELEKHRRAKLRLYLEQLKQLVPLGPDSTRHTTLSLLKRAKVHIKKL) enclose the bHLH domain. A disordered region spans residues 140–209 (RVRTDSTGSA…CRRLGRPALS (70 aa)). The segment covering 153–163 (DDSEQEVDIEG) has biased composition (acidic residues). The segment covering 199 to 209 (HCRRLGRPALS) has biased composition (basic residues).

As to quaternary structure, efficient DNA binding requires dimerization with another bHLH protein. Binds DNA as a heterodimer with MAX. Interacts with SIN3A AND SIN3B. Interacts with RNF17.

Its subcellular location is the nucleus. Transcriptional repressor. Binds with MAX to form a sequence-specific DNA-binding protein complex which recognizes the core sequence 5'-CAC[GA]TG-3'. Antagonizes MYC transcriptional activity by competing for MAX and suppresses MYC dependent cell transformation. The sequence is that of Max dimerization protein 4 (MXD4) from Homo sapiens (Human).